We begin with the raw amino-acid sequence, 401 residues long: F-box protein At2g43440 (401 aa).

The F-box domain maps to 7-53 (NTNSIYIVPELLEDIFLRLPLKSILKFKTVSRQWRSILESKLFVERR).

This chain is F-box protein At2g43440, found in Arabidopsis thaliana (Mouse-ear cress).